Consider the following 231-residue polypeptide: Acyl-protein thioesterase 1 (231 aa).

Active-site charge relay system residues include serine 121, aspartate 178, and histidine 211.

It belongs to the AB hydrolase superfamily. AB hydrolase 2 family.

It is found in the cytoplasm. The protein localises to the nucleus. The enzyme catalyses S-hexadecanoyl-L-cysteinyl-[protein] + H2O = L-cysteinyl-[protein] + hexadecanoate + H(+). Functionally, hydrolyzes fatty acids from S-acylated cysteine residues in proteins with a strong preference for palmitoylated G-alpha proteins over other acyl substrates. Mediates the deacylation of G-alpha proteins such as GPA1 in vivo, but has weak or no activity toward palmitoylated Ras proteins. Has weak lysophospholipase activity in vitro; however such activity may not exist in vivo. In Candida albicans (strain SC5314 / ATCC MYA-2876) (Yeast), this protein is Acyl-protein thioesterase 1.